The primary structure comprises 191 residues: GDP-mannose pyrophosphatase (191 aa).

Residues Tyr17, 38–40 (KRE), Arg67, and 85–87 (AGL) each bind GDP-alpha-D-mannose. One can recognise a Nudix hydrolase domain in the interval 43 to 180 (DRGNGATILL…EIRDGKTVLL (138 aa)). Mg(2+) is bound by residues Ala85, Glu100, and Glu104. The short motif at 86 to 106 (GLLDNDEPEVCIRKEAIEETG) is the Nudix box element. Residues Glu104, Glu127, 150 to 151 (DE), and Lys176 each bind GDP-alpha-D-mannose. Glu151 is a Mg(2+) binding site.

This sequence belongs to the Nudix hydrolase family. NudK subfamily. As to quaternary structure, homodimer. The cofactor is Mg(2+).

The enzyme catalyses GDP-alpha-D-mannose + H2O = alpha-D-mannose 1-phosphate + GMP + 2 H(+). In terms of biological role, nucleoside diphosphate sugar hydrolase that hydrolyzes GDP-mannose as its preferred substrate, yielding GMP and mannose-1-phosphate. This Escherichia coli (strain K12 / DH10B) protein is GDP-mannose pyrophosphatase (nudK).